A 337-amino-acid polypeptide reads, in one-letter code: Phosphatidylglycerophosphate phosphatase PTPMT1 (337 aa).

The segment at M1–D20 is disordered. Substrate contacts are provided by Y55 and D133. The Tyrosine-protein phosphatase domain maps to W73–L220. C164 acts as the Phosphocysteine intermediate in catalysis. Residues C164 to R170 carry the Glucan phosphatase signature motif CXAGXGR motif. K165–R170 is a substrate binding site.

It belongs to the protein-tyrosine phosphatase family. Non-receptor class dual specificity subfamily. As to expression, expressed in stems, roots, flowers, mature seeds and leaves.

The enzyme catalyses O-phospho-L-seryl-[protein] + H2O = L-seryl-[protein] + phosphate. The catalysed reaction is O-phospho-L-threonyl-[protein] + H2O = L-threonyl-[protein] + phosphate. It catalyses the reaction O-phospho-L-tyrosyl-[protein] + H2O = L-tyrosyl-[protein] + phosphate. It carries out the reaction a 1,2-diacyl-sn-glycero-3-phospho-(1'-sn-glycero-3'-phosphate) + H2O = a 1,2-diacyl-sn-glycero-3-phospho-(1'-sn-glycerol) + phosphate. Its pathway is phospholipid metabolism; phosphatidylglycerol biosynthesis; phosphatidylglycerol from CDP-diacylglycerol: step 2/2. Its function is as follows. Exhibits phosphatidylglycerophosphate phosphatase activity. Involved in root growth and columella cells organization. May possess protein phosphatase activity. The sequence is that of Phosphatidylglycerophosphate phosphatase PTPMT1 from Arabidopsis thaliana (Mouse-ear cress).